A 294-amino-acid chain; its full sequence is 4-hydroxy-tetrahydrodipicolinate synthase (294 aa).

Threonine 47 contributes to the pyruvate binding site. The active-site Proton donor/acceptor is tyrosine 135. Lysine 163 acts as the Schiff-base intermediate with substrate in catalysis. Valine 205 serves as a coordination point for pyruvate.

Belongs to the DapA family. Homotetramer; dimer of dimers.

Its subcellular location is the cytoplasm. The enzyme catalyses L-aspartate 4-semialdehyde + pyruvate = (2S,4S)-4-hydroxy-2,3,4,5-tetrahydrodipicolinate + H2O + H(+). It functions in the pathway amino-acid biosynthesis; L-lysine biosynthesis via DAP pathway; (S)-tetrahydrodipicolinate from L-aspartate: step 3/4. Functionally, catalyzes the condensation of (S)-aspartate-beta-semialdehyde [(S)-ASA] and pyruvate to 4-hydroxy-tetrahydrodipicolinate (HTPA). This is 4-hydroxy-tetrahydrodipicolinate synthase from Rickettsia canadensis (strain McKiel).